Reading from the N-terminus, the 226-residue chain is Thiocyanate methyltransferase 1 (226 aa).

Tryptophan 35, tryptophan 39, tryptophan 46, and glycine 73 together coordinate S-adenosyl-L-methionine. Serine 85 carries the post-translational modification Phosphoserine. S-adenosyl-L-methionine-binding positions include aspartate 94, 122-123 (DF), and tyrosine 138.

This sequence belongs to the class I-like SAM-binding methyltransferase superfamily. TPMT family. Ubiquitous.

It carries out the reaction thiocyanate + S-adenosyl-L-methionine = methyl thiocyanate + S-adenosyl-L-homocysteine. In terms of biological role, S-adenosyl-L-methionine-dependent methyltransferase. Probably involved in glucosinolate metabolism and defense against phytopathogens. Highly reactive to thiocyanate (NCS(-)) derived from myrosinase-mediated hydrolysis of glucosinolates upon tissue damage. Also accepts halid ions as substrates with a lower affinity. This chain is Thiocyanate methyltransferase 1 (TMT1), found in Brassica oleracea (Wild cabbage).